A 285-amino-acid polypeptide reads, in one-letter code: Guanylate kinase 2, chloroplastic/mitochondrial (285 aa).

Positions 1 to 19 are enriched in low complexity; the sequence is MLLTRRFSSALARSPLLPR. Residues 1-42 constitute a chloroplast and mitochondrion transit peptide; the sequence is MLLTRRFSSALARSPLLPRSLPPPRAVPATPPAPRPPPRRLM. The interval 1 to 66 is disordered; sequence MLLTRRFSSA…PPPPSGADKD (66 aa). The segment covering 20–36 has biased composition (pro residues); it reads SLPPPRAVPATPPAPRP. Low complexity predominate over residues 40-50; sequence RLMSSSSSGWH. Positions 91 to 272 constitute a Guanylate kinase-like domain; the sequence is PMILVISGPS…AVKQVESIID (182 aa). 98–105 is an ATP binding site; the sequence is GPSGVGKD. Residues Arg130, Arg224, and Arg235 contribute to the active site. An ATP-binding site is contributed by Asn255.

This sequence belongs to the guanylate kinase family. As to quaternary structure, monomer.

The protein resides in the plastid. It is found in the chloroplast. It localises to the mitochondrion. It catalyses the reaction GMP + ATP = GDP + ADP. Essential for recycling GMP and indirectly, cGMP. Essential for chloroplast differentiation at early stage of leaf development. May not be involved in the synthesis and maintenance of the organellar DNA during leaf development. The chain is Guanylate kinase 2, chloroplastic/mitochondrial (V2) from Oryza sativa subsp. japonica (Rice).